The primary structure comprises 469 residues: Adenosylhomocysteinase (469 aa).

Positions 63, 139, and 164 each coordinate substrate. An NAD(+)-binding site is contributed by T165 to T167. 2 residues coordinate substrate: K194 and D198. NAD(+)-binding positions include N199, G228–G233, E251, N300, I321–H323, and N375.

Belongs to the adenosylhomocysteinase family. NAD(+) is required as a cofactor.

It localises to the cytoplasm. The enzyme catalyses S-adenosyl-L-homocysteine + H2O = L-homocysteine + adenosine. It functions in the pathway amino-acid biosynthesis; L-homocysteine biosynthesis; L-homocysteine from S-adenosyl-L-homocysteine: step 1/1. May play a key role in the regulation of the intracellular concentration of adenosylhomocysteine. This chain is Adenosylhomocysteinase, found in Pseudomonas aeruginosa (strain LESB58).